The following is a 615-amino-acid chain: Dihydroxy-acid dehydratase (615 aa).

Residue D81 coordinates Mg(2+). Residue C122 participates in [2Fe-2S] cluster binding. Mg(2+)-binding residues include D123 and K124. K124 is subject to N6-carboxylysine. C193 serves as a coordination point for [2Fe-2S] cluster. E489 lines the Mg(2+) pocket. The Proton acceptor role is filled by S515.

The protein belongs to the IlvD/Edd family. Homodimer. [2Fe-2S] cluster serves as cofactor. The cofactor is Mg(2+).

It carries out the reaction (2R)-2,3-dihydroxy-3-methylbutanoate = 3-methyl-2-oxobutanoate + H2O. The catalysed reaction is (2R,3R)-2,3-dihydroxy-3-methylpentanoate = (S)-3-methyl-2-oxopentanoate + H2O. It participates in amino-acid biosynthesis; L-isoleucine biosynthesis; L-isoleucine from 2-oxobutanoate: step 3/4. It functions in the pathway amino-acid biosynthesis; L-valine biosynthesis; L-valine from pyruvate: step 3/4. In terms of biological role, functions in the biosynthesis of branched-chain amino acids. Catalyzes the dehydration of (2R,3R)-2,3-dihydroxy-3-methylpentanoate (2,3-dihydroxy-3-methylvalerate) into 2-oxo-3-methylpentanoate (2-oxo-3-methylvalerate) and of (2R)-2,3-dihydroxy-3-methylbutanoate (2,3-dihydroxyisovalerate) into 2-oxo-3-methylbutanoate (2-oxoisovalerate), the penultimate precursor to L-isoleucine and L-valine, respectively. The sequence is that of Dihydroxy-acid dehydratase from Pseudomonas syringae pv. syringae (strain B728a).